Consider the following 456-residue polypeptide: Alcohol acyltransferase 1 (456 aa).

Catalysis depends on proton acceptor residues H166 and D382.

It belongs to the plant acyltransferase family.

Its function is as follows. Involved in the biosynthesis of volatile esters which confer kiwifruit flavor. Alcohol acyl transferase that can use a wide range of alcohols as substrate to produce esters. This Actinidia chinensis var. chinensis (Chinese soft-hair kiwi) protein is Alcohol acyltransferase 1.